A 607-amino-acid chain; its full sequence is Chaperone protein DnaK (607 aa).

Residue Thr-173 is modified to Phosphothreonine; by autocatalysis. Over residues 577 to 588 (AQAQQGAEGAAS) the composition is skewed to low complexity. Positions 577–607 (AQAQQGAEGAASQDDDVVDADFTEVKDDDNK) are disordered. Residues 589–598 (QDDDVVDADF) show a composition bias toward acidic residues.

The protein belongs to the heat shock protein 70 family.

Functionally, acts as a chaperone. This Macrococcus caseolyticus (strain JCSC5402) (Macrococcoides caseolyticum) protein is Chaperone protein DnaK.